A 422-amino-acid polypeptide reads, in one-letter code: UDP-N-acetylglucosamine 1-carboxyvinyltransferase (422 aa).

Lysine 22–asparagine 23 is a binding site for phosphoenolpyruvate. Residue arginine 92 participates in UDP-N-acetyl-alpha-D-glucosamine binding. Residue cysteine 116 is the Proton donor of the active site. Cysteine 116 carries the post-translational modification 2-(S-cysteinyl)pyruvic acid O-phosphothioketal. Residues arginine 121 to glutamine 125, aspartate 307, and isoleucine 329 each bind UDP-N-acetyl-alpha-D-glucosamine.

Belongs to the EPSP synthase family. MurA subfamily.

Its subcellular location is the cytoplasm. The enzyme catalyses phosphoenolpyruvate + UDP-N-acetyl-alpha-D-glucosamine = UDP-N-acetyl-3-O-(1-carboxyvinyl)-alpha-D-glucosamine + phosphate. It functions in the pathway cell wall biogenesis; peptidoglycan biosynthesis. Functionally, cell wall formation. Adds enolpyruvyl to UDP-N-acetylglucosamine. This Psychrobacter arcticus (strain DSM 17307 / VKM B-2377 / 273-4) protein is UDP-N-acetylglucosamine 1-carboxyvinyltransferase.